We begin with the raw amino-acid sequence, 320 residues long: Cytosolic Fe-S cluster assembly factor NUBP1 (320 aa).

M1 is subject to N-acetylmethionine. The [4Fe-4S] cluster site is built by C8, C22, C25, and C31. 62–69 (GKGGVGKS) contacts ATP. Positions 235 and 238 each coordinate [4Fe-4S] cluster. Position 319 is a phosphoserine (S319).

This sequence belongs to the Mrp/NBP35 ATP-binding proteins family. NUBP1/NBP35 subfamily. As to quaternary structure, heterotetramer of 2 NUBP1 and 2 NUBP2 chains. Interacts with KIFC1. Interacts with NUBP2. Interacts with the BBS/CCT complex subunit CCT1. It depends on [4Fe-4S] cluster as a cofactor.

The protein resides in the cytoplasm. It is found in the nucleus. It localises to the cell projection. Its subcellular location is the cytoskeleton. The protein localises to the cilium axoneme. The protein resides in the cilium basal body. It is found in the microtubule organizing center. It localises to the centrosome. Its subcellular location is the centriole. In terms of biological role, component of the cytosolic iron-sulfur (Fe/S) protein assembly (CIA) machinery. Required for maturation of extramitochondrial Fe-S proteins. The NUBP1-NUBP2 heterotetramer forms a Fe-S scaffold complex, mediating the de novo assembly of an Fe-S cluster and its transfer to target apoproteins. Implicated in the regulation of centrosome duplication. Negatively regulates cilium formation and structure. In Homo sapiens (Human), this protein is Cytosolic Fe-S cluster assembly factor NUBP1.